A 363-amino-acid polypeptide reads, in one-letter code: Chorismate synthase (363 aa).

NADP(+) contacts are provided by Arg48 and Arg54. FMN contacts are provided by residues Arg125–Ser127, Asn237–Ala238, Gly277, Lys292–Ser296, and Arg318.

This sequence belongs to the chorismate synthase family. Homotetramer. FMNH2 is required as a cofactor.

The catalysed reaction is 5-O-(1-carboxyvinyl)-3-phosphoshikimate = chorismate + phosphate. Its pathway is metabolic intermediate biosynthesis; chorismate biosynthesis; chorismate from D-erythrose 4-phosphate and phosphoenolpyruvate: step 7/7. Its function is as follows. Catalyzes the anti-1,4-elimination of the C-3 phosphate and the C-6 proR hydrogen from 5-enolpyruvylshikimate-3-phosphate (EPSP) to yield chorismate, which is the branch point compound that serves as the starting substrate for the three terminal pathways of aromatic amino acid biosynthesis. This reaction introduces a second double bond into the aromatic ring system. The polypeptide is Chorismate synthase (Ectopseudomonas mendocina (strain ymp) (Pseudomonas mendocina)).